The following is a 437-amino-acid chain: Protein translocase subunit SecY (437 aa).

10 helical membrane-spanning segments follow: residues 19–39 (LFTL…IPGV), 69–89 (LLQI…SIIL), 122–142 (VALA…GALF), 157–177 (IFTT…VMWL), 189–209 (GMSI…LWAI), 219–239 (WIEF…VVFV), 275–295 (GVIP…IVQF), 318–338 (HIIL…AISF), 378–398 (GSLY…GFGA), and 400–420 (QNFP…LETV).

Belongs to the SecY/SEC61-alpha family. In terms of assembly, component of the Sec protein translocase complex. Heterotrimer consisting of SecY, SecE and SecG subunits. The heterotrimers can form oligomers, although 1 heterotrimer is thought to be able to translocate proteins. Interacts with the ribosome. Interacts with SecDF, and other proteins may be involved. Interacts with SecA.

Its subcellular location is the cell membrane. The central subunit of the protein translocation channel SecYEG. Consists of two halves formed by TMs 1-5 and 6-10. These two domains form a lateral gate at the front which open onto the bilayer between TMs 2 and 7, and are clamped together by SecE at the back. The channel is closed by both a pore ring composed of hydrophobic SecY resides and a short helix (helix 2A) on the extracellular side of the membrane which forms a plug. The plug probably moves laterally to allow the channel to open. The ring and the pore may move independently. The chain is Protein translocase subunit SecY from Streptomyces lividans.